Here is a 273-residue protein sequence, read N- to C-terminus: NAD(P)H-hydrate epimerase (273 aa).

Residues 18–257 (ALKLDEDLIN…LLAMEYDVQE (240 aa)) enclose the YjeF N-terminal domain. 71 to 75 (NNGGD) provides a ligand contact to (6S)-NADPHX. Residues Asn72 and Asp146 each contribute to the K(+) site. Residues 150 to 157 (GFSFHGGP), Tyr162, and Asp188 each bind (6S)-NADPHX. K(+) is bound at residue Ser191.

The protein belongs to the NnrE/AIBP family. K(+) serves as cofactor.

It carries out the reaction (6R)-NADHX = (6S)-NADHX. The enzyme catalyses (6R)-NADPHX = (6S)-NADPHX. In terms of biological role, catalyzes the epimerization of the S- and R-forms of NAD(P)HX, a damaged form of NAD(P)H that is a result of enzymatic or heat-dependent hydration. This is a prerequisite for the S-specific NAD(P)H-hydrate dehydratase to allow the repair of both epimers of NAD(P)HX. The chain is NAD(P)H-hydrate epimerase from Giardia intestinalis (strain ATCC 50803 / WB clone C6) (Giardia lamblia).